A 186-amino-acid polypeptide reads, in one-letter code: Holliday junction branch migration complex subunit RuvA (186 aa).

Positions 1-63 (MNDYINGFLY…DNHFKYYGFF (63 aa)) are domain I. Residues 64–137 (NQLVRDLFEI…QKELFNNKIS (74 aa)) form a domain II region. A region of interest (flexible linker) is located at residue Ser-137. The segment at 137–186 (SEKKNKVITSLEKLGYKTKDIYKIIINVDEDLTIDELTKYVLEKLSYINN) is domain III.

This sequence belongs to the RuvA family. As to quaternary structure, homotetramer. Forms an RuvA(8)-RuvB(12)-Holliday junction (HJ) complex. HJ DNA is sandwiched between 2 RuvA tetramers; dsDNA enters through RuvA and exits via RuvB. An RuvB hexamer assembles on each DNA strand where it exits the tetramer. Each RuvB hexamer is contacted by two RuvA subunits (via domain III) on 2 adjacent RuvB subunits; this complex drives branch migration. In the full resolvosome a probable DNA-RuvA(4)-RuvB(12)-RuvC(2) complex forms which resolves the HJ.

It is found in the cytoplasm. Its function is as follows. The RuvA-RuvB-RuvC complex processes Holliday junction (HJ) DNA during genetic recombination and DNA repair, while the RuvA-RuvB complex plays an important role in the rescue of blocked DNA replication forks via replication fork reversal (RFR). RuvA specifically binds to HJ cruciform DNA, conferring on it an open structure. The RuvB hexamer acts as an ATP-dependent pump, pulling dsDNA into and through the RuvAB complex. HJ branch migration allows RuvC to scan DNA until it finds its consensus sequence, where it cleaves and resolves the cruciform DNA. The polypeptide is Holliday junction branch migration complex subunit RuvA (Mycoplasma capricolum subsp. capricolum (strain California kid / ATCC 27343 / NCTC 10154)).